Here is a 413-residue protein sequence, read N- to C-terminus: Cardiolipin synthase B (413 aa).

2 consecutive PLD phosphodiesterase domains span residues 108 to 135 (VFRR…SAEH) and 285 to 312 (RRRP…DPLS). Active-site residues include histidine 113, lysine 115, aspartate 120, histidine 290, lysine 292, and aspartate 297. Positions 390 to 413 (VGPPAQPTMETQDRVETENTGVKP) are disordered.

Belongs to the phospholipase D family. Cardiolipin synthase subfamily. ClsB sub-subfamily.

The protein resides in the cell membrane. It carries out the reaction 2 a 1,2-diacyl-sn-glycero-3-phospho-(1'-sn-glycerol) = a cardiolipin + glycerol. Catalyzes the phosphatidyl group transfer from one phosphatidylglycerol molecule to another to form cardiolipin (CL) (diphosphatidylglycerol) and glycerol. The chain is Cardiolipin synthase B from Escherichia coli O6:H1 (strain CFT073 / ATCC 700928 / UPEC).